A 513-amino-acid polypeptide reads, in one-letter code: Na(+)/H(+) antiporter NhaB (513 aa).

The next 12 helical transmembrane spans lie at 23-43 (LALI…PFVA), 52-72 (IFTL…LLAI), 97-117 (LLLM…LFIF), 120-140 (LLLS…AAAF), 144-164 (FLDA…FYGI), 202-222 (LMMH…VGEP), 238-258 (FFLR…LTCL), 303-323 (AIIG…VGLI), 348-368 (TESL…AVII), 391-411 (LFYI…VGTI), 447-467 (ATPN…APLI), and 475-495 (VWMA…CVEF).

This sequence belongs to the NhaB Na(+)/H(+) (TC 2.A.34) antiporter family.

Its subcellular location is the cell inner membrane. It catalyses the reaction 2 Na(+)(in) + 3 H(+)(out) = 2 Na(+)(out) + 3 H(+)(in). In terms of biological role, na(+)/H(+) antiporter that extrudes sodium in exchange for external protons. The sequence is that of Na(+)/H(+) antiporter NhaB from Shigella boydii serotype 18 (strain CDC 3083-94 / BS512).